The chain runs to 664 residues: Ent-copalyl diphosphate synthase 5 (664 aa).

A substrate-binding site is contributed by K101. The Mg(2+) site is built by D233 and D235. The DXDD motif signature appears at 233-236; the sequence is DIDD. K320 lines the substrate pocket.

Belongs to the terpene synthase family. Tpsc subfamily. Requires Mg(2+) as cofactor. As to expression, ubiquitous expression in roots, stems, leaves and flowers.

It localises to the plastid. Its subcellular location is the chloroplast. It catalyses the reaction (2E,6E,10E)-geranylgeranyl diphosphate = ent-copalyl diphosphate. It participates in secondary metabolite biosynthesis; terpenoid biosynthesis. In terms of biological role, involved in the biosynthesis of ent-kaurene diterpenoids natural products such as oridonin, miltiradiene, eriocalyxin B and nezukol, known to exhibit antitumor, anti-inflammatory and antibacterial activities. Catalyzes the conversion of (2E,6E,10E)-geranylgeranyl diphosphate (GGPP) to ent-copalyl diphosphate (ent-CPP). This is Ent-copalyl diphosphate synthase 5 from Isodon rubescens (Rabdosia rubescens).